The sequence spans 606 residues: Phosphomethylpyrimidine synthase (606 aa).

A disordered region spans residues 84–103 (EPYPARSVKPEDNGLTSSPI). Residues asparagine 209, methionine 238, tyrosine 267, histidine 303, 323 to 325 (SRG), 364 to 367 (DGLR), and glutamate 403 contribute to the substrate site. Position 407 (histidine 407) interacts with Zn(2+). Tyrosine 430 serves as a coordination point for substrate. Residue histidine 471 coordinates Zn(2+). [4Fe-4S] cluster-binding residues include cysteine 551, cysteine 554, and cysteine 559.

Belongs to the ThiC family. As to quaternary structure, homodimer. The cofactor is [4Fe-4S] cluster.

The enzyme catalyses 5-amino-1-(5-phospho-beta-D-ribosyl)imidazole + S-adenosyl-L-methionine = 4-amino-2-methyl-5-(phosphooxymethyl)pyrimidine + CO + 5'-deoxyadenosine + formate + L-methionine + 3 H(+). It participates in cofactor biosynthesis; thiamine diphosphate biosynthesis. Functionally, catalyzes the synthesis of the hydroxymethylpyrimidine phosphate (HMP-P) moiety of thiamine from aminoimidazole ribotide (AIR) in a radical S-adenosyl-L-methionine (SAM)-dependent reaction. This chain is Phosphomethylpyrimidine synthase, found in Bartonella tribocorum (strain CIP 105476 / IBS 506).